A 601-amino-acid polypeptide reads, in one-letter code: Leucine-rich repeat-containing protein 40 (601 aa).

LRR repeat units follow at residues Ala-33–Leu-56, Gln-79–Leu-101, Leu-102–Asp-124, Leu-125–Leu-148, Asn-150–Gln-170, Leu-171–Asn-193, Leu-194–Met-217, Asn-219–Gln-239, Met-240–Thr-264, Lys-266–His-285, Leu-286–Leu-308, Leu-309–Lys-334, Lys-336–Lys-355, Ile-397–Ala-420, Gly-423–Leu-446, Lys-447–His-469, Leu-470–Gly-492, Leu-493–Ile-516, Ser-518–Thr-539, Leu-540–Cys-563, and Ser-565–Lys-586.

The polypeptide is Leucine-rich repeat-containing protein 40 (lrrc40) (Danio rerio (Zebrafish)).